The following is a 565-amino-acid chain: CTP synthase (565 aa).

Positions 1–272 (MARPKNVKHI…DLRVMKKLGL (272 aa)) are amidoligase domain. Serine 18 serves as a coordination point for CTP. UTP is bound at residue serine 18. 19–24 (SLGKGI) contacts ATP. L-glutamine is bound at residue tyrosine 59. Aspartate 76 lines the ATP pocket. Residues aspartate 76 and glutamate 146 each contribute to the Mg(2+) site. CTP is bound by residues 153–155 (DIE), 193–198 (KTKPTQ), and lysine 229. UTP-binding positions include 193–198 (KTKPTQ) and lysine 229. The Glutamine amidotransferase type-1 domain occupies 299-543 (TIGVCGKYTE…VQAAKEFAMG (245 aa)). Glycine 363 contributes to the L-glutamine binding site. The active-site Nucleophile; for glutamine hydrolysis is cysteine 390. L-glutamine is bound by residues 391 to 394 (LGMQ), glutamate 414, and arginine 471. Residues histidine 516 and glutamate 518 contribute to the active site.

This sequence belongs to the CTP synthase family. As to quaternary structure, homotetramer.

It carries out the reaction UTP + L-glutamine + ATP + H2O = CTP + L-glutamate + ADP + phosphate + 2 H(+). The catalysed reaction is L-glutamine + H2O = L-glutamate + NH4(+). It catalyses the reaction UTP + NH4(+) + ATP = CTP + ADP + phosphate + 2 H(+). It functions in the pathway pyrimidine metabolism; CTP biosynthesis via de novo pathway; CTP from UDP: step 2/2. With respect to regulation, allosterically activated by GTP, when glutamine is the substrate; GTP has no effect on the reaction when ammonia is the substrate. The allosteric effector GTP functions by stabilizing the protein conformation that binds the tetrahedral intermediate(s) formed during glutamine hydrolysis. Inhibited by the product CTP, via allosteric rather than competitive inhibition. Functionally, catalyzes the ATP-dependent amination of UTP to CTP with either L-glutamine or ammonia as the source of nitrogen. Regulates intracellular CTP levels through interactions with the four ribonucleotide triphosphates. This chain is CTP synthase, found in Chlorobaculum parvum (strain DSM 263 / NCIMB 8327) (Chlorobium vibrioforme subsp. thiosulfatophilum).